The following is a 113-amino-acid chain: Large ribosomal subunit protein uL22 (113 aa).

The protein belongs to the universal ribosomal protein uL22 family. As to quaternary structure, part of the 50S ribosomal subunit.

Functionally, this protein binds specifically to 23S rRNA; its binding is stimulated by other ribosomal proteins, e.g. L4, L17, and L20. It is important during the early stages of 50S assembly. It makes multiple contacts with different domains of the 23S rRNA in the assembled 50S subunit and ribosome. The globular domain of the protein is located near the polypeptide exit tunnel on the outside of the subunit, while an extended beta-hairpin is found that lines the wall of the exit tunnel in the center of the 70S ribosome. This is Large ribosomal subunit protein uL22 from Geobacillus kaustophilus (strain HTA426).